Here is a 312-residue protein sequence, read N- to C-terminus: MATSKILLYYAFTPLSDPKAVQLWQRELCESLNLRGRILISTHGINGTVGGDIDDCKAYIKKTREYPGFNRMQFKWSEGGADDFPKLSVKVRDEIVAFGAPDELKVDENGVVGGGVHLKPQQVNELVEARGDEVVFFDGRNAMEAQIGKFKDAVVPDVETTHDFIAEIESGKYDDLKDKPVVTYCTGGIRCEILSSLMINRGFKEVYQIDGGIVRYGEQFGNKGLWEGSLYVFDKRMHMEFGEDYKEVGHCIHCDTPTNKFEHCLNEDDCRELVLMCPDCFANVETRHCKRERCAAIAADFAEQGIDPLVTS.

The 96-residue stretch at 130 to 225 folds into the Rhodanese domain; it reads RGDEVVFFDG…YGEQFGNKGL (96 aa). C185 (cysteine persulfide intermediate) is an active-site residue.

This sequence belongs to the TrhO family.

The enzyme catalyses uridine(34) in tRNA + AH2 + O2 = 5-hydroxyuridine(34) in tRNA + A + H2O. Its function is as follows. Catalyzes oxygen-dependent 5-hydroxyuridine (ho5U) modification at position 34 in tRNAs. This chain is tRNA uridine(34) hydroxylase, found in Corynebacterium glutamicum (strain R).